Here is a 263-residue protein sequence, read N- to C-terminus: MLRICGLGVVLSLAVAAVAVMAVWLMDWWGPRPGIRLFLPEELARYRGGPGDPGLYLALLGRVYDVSSGRRHYEPGAHYSGFAGRDASRAFVTGDYSEAGLVDDINGLSSSEILTLHNWLSFYEKNYVFVGRLVGRFYRKDGLPTSELTQVEAMVTKGMEANEQEQREKQKFPPCNSEWSSAKGSRLWCSQKSGGVHRDWIGVPRKLYKPGAKEPHCVCVRTTGPPSDQQDNPRHSNHGDLDNPNLEEYTGCPPLATTCSFPL.

Residues 1 to 22 (MLRICGLGVVLSLAVAAVAVMA) form the signal peptide. Positions 35-134 (IRLFLPEELA…KNYVFVGRLV (100 aa)) constitute a Cytochrome b5 heme-binding domain. Residues 220–249 (VRTTGPPSDQQDNPRHSNHGDLDNPNLEEY) form a disordered region. Residues 231–241 (DNPRHSNHGDL) show a composition bias toward basic and acidic residues.

It belongs to the cytochrome b5 family. MAPR subfamily. As to expression, expressed in various tissues including brain, heart, adrenal gland, and kidney. In the brain, mainly expressed in pyramidal cells around the CA3 region of Ammon horn in hippocampus. Present in brain (at protein level).

It is found in the secreted. Functionally, heme-binding protein which promotes neuronal but not astrocyte differentiation. The polypeptide is Neuferricin (Mus musculus (Mouse)).